A 333-amino-acid polypeptide reads, in one-letter code: Glycerol-3-phosphate dehydrogenase [NAD(P)+] (333 aa).

Residues Ser-10, Trp-11, His-31, Arg-32, and Lys-105 each coordinate NADPH. Residues Lys-105, Gly-136, and Ser-138 each contribute to the sn-glycerol 3-phosphate site. Ala-140 contributes to the NADPH binding site. Sn-glycerol 3-phosphate-binding residues include Lys-191, Asp-244, Ser-254, Arg-255, and Asn-256. The active-site Proton acceptor is Lys-191. Arg-255 serves as a coordination point for NADPH. 2 residues coordinate NADPH: Ile-279 and Glu-281.

It belongs to the NAD-dependent glycerol-3-phosphate dehydrogenase family.

It is found in the cytoplasm. It catalyses the reaction sn-glycerol 3-phosphate + NAD(+) = dihydroxyacetone phosphate + NADH + H(+). It carries out the reaction sn-glycerol 3-phosphate + NADP(+) = dihydroxyacetone phosphate + NADPH + H(+). It participates in membrane lipid metabolism; glycerophospholipid metabolism. Catalyzes the reduction of the glycolytic intermediate dihydroxyacetone phosphate (DHAP) to sn-glycerol 3-phosphate (G3P), the key precursor for phospholipid synthesis. This is Glycerol-3-phosphate dehydrogenase [NAD(P)+] from Chlorobium luteolum (strain DSM 273 / BCRC 81028 / 2530) (Pelodictyon luteolum).